Reading from the N-terminus, the 108-residue chain is ATP synthase epsilon chain (108 aa).

Belongs to the ATPase epsilon chain family. In terms of assembly, F-type ATPases have 2 components, CF(1) - the catalytic core - and CF(0) - the membrane proton channel. CF(1) has five subunits: alpha(3), beta(3), gamma(1), delta(1), epsilon(1). CF(0) has three main subunits: a, b and c.

The protein localises to the cell inner membrane. Produces ATP from ADP in the presence of a proton gradient across the membrane. In Thermotoga maritima (strain ATCC 43589 / DSM 3109 / JCM 10099 / NBRC 100826 / MSB8), this protein is ATP synthase epsilon chain.